Reading from the N-terminus, the 364-residue chain is MQPRDLSDHSPYVPGRGVEEVARDRGLDPDDLIKLSSNENPHGPSPAAVDAIREHADRVHQYPKSSHTDLTAKLAEKWDVSTEQVWVSPGADGSIDYLSRAALEPGDEVLVPEPGFAYYAMSARYHHGEVSEYALSPDDGFAQDAETVLSAYGGERIVYLTSPHNPSGSVMPLDEVRAIADATAEETLVVVDEAYGEFAEVDSAIPLVDERDDVAVLRTFSKAYGLAGLRIGYSVVPEAWGEAYARVNTPFAANELACRAALAALDDEEHVAESVETARWAREYIADELDAPTVESAGNFVLAEVGDAERVAEEAQERGVIIRDCTSFGLPNHVRISTGTREGTREAVARLNETLADLGLGVRA.

A disordered region spans residues 1–46; that stretch reads MQPRDLSDHSPYVPGRGVEEVARDRGLDPDDLIKLSSNENPHGPSP. The segment covering 17 to 33 has biased composition (basic and acidic residues); sequence GVEEVARDRGLDPDDLI. K222 is modified (N6-(pyridoxal phosphate)lysine).

Belongs to the class-II pyridoxal-phosphate-dependent aminotransferase family. Histidinol-phosphate aminotransferase subfamily. Pyridoxal 5'-phosphate serves as cofactor.

It carries out the reaction L-histidinol phosphate + 2-oxoglutarate = 3-(imidazol-4-yl)-2-oxopropyl phosphate + L-glutamate. It participates in amino-acid biosynthesis; L-histidine biosynthesis; L-histidine from 5-phospho-alpha-D-ribose 1-diphosphate: step 7/9. This Halorubrum lacusprofundi (strain ATCC 49239 / DSM 5036 / JCM 8891 / ACAM 34) protein is Histidinol-phosphate aminotransferase.